The following is a 553-amino-acid chain: Methionine--tRNA ligase (553 aa).

Positions 12–22 (PYANSQLHLGH) match the 'HIGH' region motif. 4 residues coordinate Zn(2+): C144, C147, C157, and C160. A 'KMSKS' region motif is present at residues 332 to 336 (KFSKS). An ATP-binding site is contributed by K335.

It belongs to the class-I aminoacyl-tRNA synthetase family. MetG type 1 subfamily. As to quaternary structure, monomer. Zn(2+) serves as cofactor.

Its subcellular location is the cytoplasm. The catalysed reaction is tRNA(Met) + L-methionine + ATP = L-methionyl-tRNA(Met) + AMP + diphosphate. In terms of biological role, is required not only for elongation of protein synthesis but also for the initiation of all mRNA translation through initiator tRNA(fMet) aminoacylation. This Dehalococcoides mccartyi (strain CBDB1) protein is Methionine--tRNA ligase.